A 514-amino-acid polypeptide reads, in one-letter code: ATP synthase subunit alpha (514 aa).

170–177 serves as a coordination point for ATP; sequence GDRQIGKT.

It belongs to the ATPase alpha/beta chains family. As to quaternary structure, F-type ATPases have 2 components, CF(1) - the catalytic core - and CF(0) - the membrane proton channel. CF(1) has five subunits: alpha(3), beta(3), gamma(1), delta(1), epsilon(1). CF(0) has three main subunits: a(1), b(2) and c(9-12). The alpha and beta chains form an alternating ring which encloses part of the gamma chain. CF(1) is attached to CF(0) by a central stalk formed by the gamma and epsilon chains, while a peripheral stalk is formed by the delta and b chains.

The protein localises to the cell inner membrane. The catalysed reaction is ATP + H2O + 4 H(+)(in) = ADP + phosphate + 5 H(+)(out). Produces ATP from ADP in the presence of a proton gradient across the membrane. The alpha chain is a regulatory subunit. This Pseudomonas fluorescens (strain Pf0-1) protein is ATP synthase subunit alpha.